A 351-amino-acid polypeptide reads, in one-letter code: RISC-loading complex subunit tarbp2 (351 aa).

A disordered region spans residues 1 to 22; the sequence is MSENGDCEHQTSSGFPSIEQML. 2 DRBM domains span residues 29-96 and 150-218; these read TPIS…LLKE and NPVG…QIHQ. The segment at 221–243 is disordered; sequence AEHRESGETEPEEDQFSVGKLDG. In terms of domain architecture, DRBM 3 spans 278 to 346; the sequence is GFCSLLQDLS…AHNALQYLKI (69 aa).

Belongs to the TARBP2 family. As to quaternary structure, self-associates. Component of the RISC loading complex (RLC), or micro-RNA (miRNA) loading complex (miRLC), which is composed of dicer1, ago2 and tarbp2. Note that the trimeric RLC/miRLC is also referred to as RISC.

It localises to the cytoplasm. In terms of biological role, required for formation of the RNA induced silencing complex (RISC). Component of the RISC loading complex (RLC), also known as the micro-RNA (miRNA) loading complex (miRLC), which is composed of dicer1, ago2 and tarbp2. Within the RLC/miRLC, dicer1 and tarbp2 are required to process precursor miRNAs (pre-miRNAs) to mature miRNAs and then load them onto ago2. ago2 bound to the mature miRNA constitutes the minimal RISC and may subsequently dissociate from dicer1 and tarbp2. May also play a role in the production of short interfering RNAs (siRNAs) from double-stranded RNA (dsRNA) by dicer1. This Xenopus laevis (African clawed frog) protein is RISC-loading complex subunit tarbp2 (tarbp2).